Here is a 330-residue protein sequence, read N- to C-terminus: Inactive hydroxysteroid dehydrogenase-like protein 1 (330 aa).

Ala-2 is subject to N-acetylalanine. Residues 2–82 are required for mitochondria translocation; sequence AAVDSFYLLY…SGATDGIGKA (81 aa). NADP(+)-binding positions include 74 to 80, Asp-125, and Lys-222; that span reads GATDGIG.

Belongs to the short-chain dehydrogenases/reductases (SDR) family. 17-beta-HSD 3 subfamily. Interacts with STYXL1.

The protein localises to the mitochondrion. The protein is Inactive hydroxysteroid dehydrogenase-like protein 1 (Hsdl1) of Rattus norvegicus (Rat).